A 388-amino-acid chain; its full sequence is MRYLTAGESHGPSLTAIIEGIPAGLKLSAKDINEDLKRRQGGYGRGNRMKIETDQVIISSGVRHGKTLGSPITLTVTNKDHSKWLDIMSVEDIEERLKQKRRIKHPRPGHADLVGGIKYRFDDLRNALERSSARETTMRVAIGAIAKRILKEIGIEIANHIVVFGGKEITVPDKLTVQQIKVLSSQSQVAIVNPSFEQEIKDYIDSVKKAGDTIGGVVETIVGGVPVGLGSYVHWDRKLDAKIAQAVVSINAFKGVEFGLGFKSGFLKGSQVMDSISWTKDQGYIRQSNNLGGFEGGMTNGEPIIVRGVMKPIPTLYKPLMSVDIDTHEPYRATVERSDPTALPAAGVVMEAVVATVLVTEVLEKFSSDNMYELKEAVKLYRNYVDHF.

NADP(+) contacts are provided by Arg-39 and Arg-45. FMN-binding positions include 130-132 (RSS), 251-252 (NA), Gly-296, 311-315 (KPIPT), and Arg-337.

It belongs to the chorismate synthase family. Homotetramer. It depends on FMNH2 as a cofactor.

It catalyses the reaction 5-O-(1-carboxyvinyl)-3-phosphoshikimate = chorismate + phosphate. Its pathway is metabolic intermediate biosynthesis; chorismate biosynthesis; chorismate from D-erythrose 4-phosphate and phosphoenolpyruvate: step 7/7. In terms of biological role, catalyzes the anti-1,4-elimination of the C-3 phosphate and the C-6 proR hydrogen from 5-enolpyruvylshikimate-3-phosphate (EPSP) to yield chorismate, which is the branch point compound that serves as the starting substrate for the three terminal pathways of aromatic amino acid biosynthesis. This reaction introduces a second double bond into the aromatic ring system. The protein is Chorismate synthase of Streptococcus agalactiae serotype V (strain ATCC BAA-611 / 2603 V/R).